The following is a 306-amino-acid chain: Ribonuclease Z (306 aa).

Zn(2+) contacts are provided by H63, H65, D67, H68, H141, D211, and H269. Residue D67 is the Proton acceptor of the active site.

Belongs to the RNase Z family. In terms of assembly, homodimer. The cofactor is Zn(2+).

It catalyses the reaction Endonucleolytic cleavage of RNA, removing extra 3' nucleotides from tRNA precursor, generating 3' termini of tRNAs. A 3'-hydroxy group is left at the tRNA terminus and a 5'-phosphoryl group is left at the trailer molecule.. In terms of biological role, zinc phosphodiesterase, which displays some tRNA 3'-processing endonuclease activity. Probably involved in tRNA maturation, by removing a 3'-trailer from precursor tRNA. The polypeptide is Ribonuclease Z (Staphylococcus aureus (strain bovine RF122 / ET3-1)).